Reading from the N-terminus, the 236-residue chain is Rab-like protein 3 (236 aa).

The small GTPase-like stretch occupies residues 1 to 235 (MASLDRVKVL…GGGALKNFHC (235 aa)). GTP-binding positions include 16–21 (GVGKSS), 148–150 (KLD), and 179–180 (DC).

This sequence belongs to the small GTPase superfamily. Rab family. Homodimer. Interacts with GPR89; the interaction stabilizes GPR89. Interacts with RAP1GDS1.

Required for KRAS signaling regulation and modulation of cell proliferation. Regulator of KRAS prenylation, and probably prenylation of other small GTPases. Required for lymphocyte development and function. Not required for myeloid cell development. This is Rab-like protein 3 (Rabl3) from Mus musculus (Mouse).